A 671-amino-acid chain; its full sequence is Acetyl-coenzyme A synthetase 2 (671 aa).

Residues 207–210 (RGGR) and Thr326 contribute to the CoA site. ATP-binding positions include 402-404 (GEP), 426-431 (DTYWQT), Asp517, and Arg532. Residue Ser540 participates in CoA binding. Arg543 is a binding site for ATP. Residue Arg603 participates in CoA binding.

This sequence belongs to the ATP-dependent AMP-binding enzyme family.

The catalysed reaction is acetate + ATP + CoA = acetyl-CoA + AMP + diphosphate. The protein is Acetyl-coenzyme A synthetase 2 (ACS2) of Candida albicans (strain SC5314 / ATCC MYA-2876) (Yeast).